The following is an 802-amino-acid chain: ATP-dependent zinc metalloprotease FTSH 3, mitochondrial (802 aa).

A mitochondrion-targeting transit peptide spans 1-21; the sequence is MSLSSLSRALARSARSSRQRQ. Over residues 1 to 23 the composition is skewed to low complexity; the sequence is MSLSSLSRALARSARSSRQRQGS. Disordered stretches follow at residues 1 to 33 and 85 to 120; these read MSLSSLSRALARSARSSRQRQGSLLGGHGGLRA and DKSKKNHGKHSEEENKGKGDESDKSDSKKQSSSGDQ. A compositionally biased stretch (basic and acidic residues) spans 85–113; the sequence is DKSKKNHGKHSEEENKGKGDESDKSDSKK. Residues 133–153 traverse the membrane as a helical segment; sequence MIAPLFLFGLLLLSASASSSE. ATP is bound at residue 360–367; sequence GPPGTGKT. A Zn(2+)-binding site is contributed by H585. E586 is an active-site residue. Zn(2+)-binding residues include H589 and D661. The segment at 773-802 is disordered; the sequence is KQGFQDEDSNRNAELSNADGASSLGEAVAS.

It in the N-terminal section; belongs to the AAA ATPase family. This sequence in the C-terminal section; belongs to the peptidase M41 family. Zn(2+) is required as a cofactor.

It localises to the mitochondrion inner membrane. Functionally, probable ATP-dependent zinc metallopeptidase. This chain is ATP-dependent zinc metalloprotease FTSH 3, mitochondrial (FTSH3), found in Oryza sativa subsp. japonica (Rice).